Here is a 362-residue protein sequence, read N- to C-terminus: tRNA-specific 2-thiouridylase MnmA 3 (362 aa).

Residues 11 to 18 (GMSGGIDS) and M37 each bind ATP. C91 acts as the Nucleophile in catalysis. The cysteines at positions 91 and 188 are disulfide-linked. Position 115 (G115) interacts with ATP. Residues 137-139 (KDQ) are interaction with tRNA. The active-site Cysteine persulfide intermediate is the C188. The interval 296–297 (RY) is interaction with tRNA.

It belongs to the MnmA/TRMU family.

The protein resides in the cytoplasm. It carries out the reaction S-sulfanyl-L-cysteinyl-[protein] + uridine(34) in tRNA + AH2 + ATP = 2-thiouridine(34) in tRNA + L-cysteinyl-[protein] + A + AMP + diphosphate + H(+). Its function is as follows. Catalyzes the 2-thiolation of uridine at the wobble position (U34) of tRNA, leading to the formation of s(2)U34. In Bacteroides fragilis (strain YCH46), this protein is tRNA-specific 2-thiouridylase MnmA 3.